The chain runs to 421 residues: UDP-N-acetylglucosamine 1-carboxyvinyltransferase (421 aa).

Phosphoenolpyruvate is bound at residue 22-23 (KN). A UDP-N-acetyl-alpha-D-glucosamine-binding site is contributed by R93. C117 functions as the Proton donor in the catalytic mechanism. C117 bears the 2-(S-cysteinyl)pyruvic acid O-phosphothioketal mark. UDP-N-acetyl-alpha-D-glucosamine-binding positions include 122-126 (RPVDL), D308, and I330.

This sequence belongs to the EPSP synthase family. MurA subfamily.

Its subcellular location is the cytoplasm. It carries out the reaction phosphoenolpyruvate + UDP-N-acetyl-alpha-D-glucosamine = UDP-N-acetyl-3-O-(1-carboxyvinyl)-alpha-D-glucosamine + phosphate. It participates in cell wall biogenesis; peptidoglycan biosynthesis. In terms of biological role, cell wall formation. Adds enolpyruvyl to UDP-N-acetylglucosamine. This is UDP-N-acetylglucosamine 1-carboxyvinyltransferase from Pseudomonas putida (strain ATCC 700007 / DSM 6899 / JCM 31910 / BCRC 17059 / LMG 24140 / F1).